The chain runs to 1031 residues: Putative protein TIC 214 N-terminal part (1031 aa).

Helical transmembrane passes span 11 to 31 (ILWA…LFGL), 68 to 88 (TLGQ…IMLL), 92 to 112 (AITL…KDLS), 127 to 147 (GIIQ…ILLP), 166 to 186 (SFFV…LINL), and 212 to 232 (TFSI…PVPF).

Belongs to the TIC214 family. Part of the Tic complex.

The protein resides in the plastid. Its subcellular location is the chloroplast inner membrane. Involved in protein precursor import into chloroplasts. May be part of an intermediate translocation complex acting as a protein-conducting channel at the inner envelope. The sequence is that of Putative protein TIC 214 N-terminal part from Anthoceros angustus (Hornwort).